We begin with the raw amino-acid sequence, 470 residues long: Uronate isomerase (470 aa).

Belongs to the metallo-dependent hydrolases superfamily. Uronate isomerase family.

The catalysed reaction is D-glucuronate = D-fructuronate. The enzyme catalyses aldehydo-D-galacturonate = keto-D-tagaturonate. It participates in carbohydrate metabolism; pentose and glucuronate interconversion. The sequence is that of Uronate isomerase from Salmonella typhi.